The sequence spans 141 residues: Terrelysin (141 aa).

It belongs to the aegerolysin family.

It localises to the cytoplasm. Functionally, hemolysins are potential virulence factors. Has hemolytic activity against sheep erythrocytes in vitro. The polypeptide is Terrelysin (Aspergillus terreus (strain NIH 2624 / FGSC A1156)).